The following is a 353-amino-acid chain: Uroporphyrinogen decarboxylase (353 aa).

Substrate-binding positions include 26–30 (RQAGR), D76, Y153, T208, and H326.

This sequence belongs to the uroporphyrinogen decarboxylase family. Homodimer.

The protein resides in the cytoplasm. It carries out the reaction uroporphyrinogen III + 4 H(+) = coproporphyrinogen III + 4 CO2. It functions in the pathway porphyrin-containing compound metabolism; protoporphyrin-IX biosynthesis; coproporphyrinogen-III from 5-aminolevulinate: step 4/4. Its function is as follows. Catalyzes the decarboxylation of four acetate groups of uroporphyrinogen-III to yield coproporphyrinogen-III. The chain is Uroporphyrinogen decarboxylase from Chromohalobacter salexigens (strain ATCC BAA-138 / DSM 3043 / CIP 106854 / NCIMB 13768 / 1H11).